A 71-amino-acid chain; its full sequence is Exodeoxyribonuclease 7 small subunit (71 aa).

It belongs to the XseB family. In terms of assembly, heterooligomer composed of large and small subunits.

Its subcellular location is the cytoplasm. The catalysed reaction is Exonucleolytic cleavage in either 5'- to 3'- or 3'- to 5'-direction to yield nucleoside 5'-phosphates.. In terms of biological role, bidirectionally degrades single-stranded DNA into large acid-insoluble oligonucleotides, which are then degraded further into small acid-soluble oligonucleotides. In Endomicrobium trichonymphae, this protein is Exodeoxyribonuclease 7 small subunit.